The chain runs to 5263 residues: Fibroin heavy chain (5263 aa).

Residues 1–21 (MRVKTFVILCCALQYVAYTNA) form the signal peptide. Positions 149-5206 (AAVGAGAGAG…GSGAGAGGSV (5058 aa)) are highly repetitive. The cysteines at positions 5260 and 5263 are disulfide-linked.

As to quaternary structure, silk fibroin elementary unit consists in a disulfide-linked heavy and light chain and a p25 glycoprotein in molar ratios of 6:6:1. This results in a complex of approximately 2.3 MDa. Post-translationally, the interchain disulfide bridge is essential for the intracellular transport and secretion of fibroin. Produced exclusively in the posterior (PSG) section of silk glands, which are essentially modified salivary glands.

Its function is as follows. Core component of the silk filament; a strong, insoluble and chemically inert fiber. The sequence is that of Fibroin heavy chain (FIBH) from Bombyx mori (Silk moth).